The sequence spans 744 residues: Tripartite motif-containing protein 2 (744 aa).

Ser-10 is modified (phosphoserine). An RING-type zinc finger spans residues 23–64 (CSICLERYKNPKVLPCLHTFCERCLQNYIPAHSLTLSCPVCR). A B box-type zinc finger spans residues 113–154 (GKPLSCPNHDGNVMEFYCQSCETAMCRECTEGEHAEHPTVPL). Zn(2+) contacts are provided by Cys-118, His-121, Cys-141, and His-146. Residues 320-421 (TTNAVASETV…IRGSPFKLKV (102 aa)) form a Filamin repeat. Position 371 is a phosphothreonine (Thr-371). 3 positions are modified to phosphoserine: Ser-375, Ser-424, and Ser-428. The tract at residues 432–462 (EGVKRRVKSPGSGHVKQKAVKRPASMYSTGK) is disordered. NHL repeat units lie at residues 473 to 516 (IFRV…FSND), 520 to 563 (KSRF…FSND), 564 to 605 (GKFK…FQPN), 609 to 652 (VTRF…FNQE), 656 to 699 (MLKF…FDGS), and 700 to 743 (GSFL…YRYL).

The protein belongs to the TRIM/RBCC family. As to quaternary structure, forms homooligomers. Interacts with TRIM3; this interaction reduces TRIM2 activity. Interacts with myosin V; myosin V may not be a substrate for ubiquitination. Interacts with NEFL. Interacts with phosphorylated BCL2L11. Interacts with SIRPA. RING-type zinc finger-dependent and UBE2D1-dependent autoubiquitination. In terms of tissue distribution, highly expressed in the cerebellum, hippocampus, retina and spinal cord. In the cerebellum, strongest expression in Purkinje cells and in the deep cerebellar nuclei. In retina, high expression in the ganglionic cell layer, inner nuclear layer and inthe outer plexiform layer. Particularly high expression in the hippocampus, in pyramidal cells of CA1-CA3 hippocampal areas and ingranule cells of the dentate gyrus.

It localises to the cytoplasm. The enzyme catalyses S-ubiquitinyl-[E2 ubiquitin-conjugating enzyme]-L-cysteine + [acceptor protein]-L-lysine = [E2 ubiquitin-conjugating enzyme]-L-cysteine + N(6)-ubiquitinyl-[acceptor protein]-L-lysine.. It participates in protein modification; protein ubiquitination. UBE2D1-dependent E3 ubiquitin-protein ligase that mediates the ubiquitination of NEFL and of phosphorylated BCL2L11. Plays a neuroprotective function. May play a role in neuronal rapid ischemic tolerance. Plays a role in antiviral immunity and limits new world arenavirus infection independently of its ubiquitin ligase activity by decreasing virus internalization. The protein is Tripartite motif-containing protein 2 (Trim2) of Mus musculus (Mouse).